A 494-amino-acid polypeptide reads, in one-letter code: Glycerol kinase (494 aa).

An ADP-binding site is contributed by T13. The ATP site is built by T13, T14, and S15. T13 provides a ligand contact to sn-glycerol 3-phosphate. R17 lines the ADP pocket. Sn-glycerol 3-phosphate contacts are provided by R83, E84, Y135, and D244. Glycerol-binding residues include R83, E84, Y135, D244, and Q245. ADP is bound by residues T266 and G309. 4 residues coordinate ATP: T266, G309, Q313, and G410. ADP contacts are provided by G410 and N414.

The protein belongs to the FGGY kinase family.

The enzyme catalyses glycerol + ATP = sn-glycerol 3-phosphate + ADP + H(+). It functions in the pathway polyol metabolism; glycerol degradation via glycerol kinase pathway; sn-glycerol 3-phosphate from glycerol: step 1/1. With respect to regulation, inhibited by fructose 1,6-bisphosphate (FBP). Functionally, key enzyme in the regulation of glycerol uptake and metabolism. Catalyzes the phosphorylation of glycerol to yield sn-glycerol 3-phosphate. The protein is Glycerol kinase of Shewanella baltica (strain OS195).